A 324-amino-acid chain; its full sequence is Envelope protein H3 (324 aa).

The Virion surface portion of the chain corresponds to 1-284 (MAAVKTPVIV…FTTPLISFFG (284 aa)). A helical; Signal-anchor membrane pass occupies residues 285-305 (LFDINVIGLIVILFIMFMLIF). The Intravirion portion of the chain corresponds to 306–324 (NVKSKLLWFLTGTFVTAFI).

Belongs to the orthopoxvirus OPG108 family. Post-translationally, does not contain disulfide bonds.

It is found in the virion membrane. In terms of biological role, envelope protein that binds to heparan sulfate on the cell surface and might provide virion attachment to target cell. This Homo sapiens (Human) protein is Envelope protein H3 (OPG108).